Reading from the N-terminus, the 266-residue chain is Aliphatic sulfonates import ATP-binding protein SsuB (266 aa).

The region spanning 23–244 (LALDAITKHY…RRGSAKLAEL (222 aa)) is the ABC transporter domain. 55-62 (GRSGCGKS) provides a ligand contact to ATP.

It belongs to the ABC transporter superfamily. Aliphatic sulfonates importer (TC 3.A.1.17.2) family. In terms of assembly, the complex is composed of two ATP-binding proteins (SsuB), two transmembrane proteins (SsuC) and a solute-binding protein (SsuA).

The protein resides in the cell inner membrane. It carries out the reaction ATP + H2O + aliphatic sulfonate-[sulfonate-binding protein]Side 1 = ADP + phosphate + aliphatic sulfonateSide 2 + [sulfonate-binding protein]Side 1.. Part of the ABC transporter complex SsuABC involved in aliphatic sulfonates import. Responsible for energy coupling to the transport system. This Pectobacterium atrosepticum (strain SCRI 1043 / ATCC BAA-672) (Erwinia carotovora subsp. atroseptica) protein is Aliphatic sulfonates import ATP-binding protein SsuB.